The sequence spans 219 residues: Adenylate kinase (219 aa).

Residue 12–17 (GAGKGT) coordinates ATP. The NMP stretch occupies residues 32 to 61 (STGDMLRAAVKAGTPIGLQAKAVMDAGELV). Residues Thr33, Arg38, 59-61 (ELV), 87-90 (GYPR), and Gln94 each bind AMP. The tract at residues 128 to 165 (GRFSCARCGEGYHDRYKLPKVADICDVCGSKEFKRRPD) is LID. Arg129 is a binding site for ATP. Zn(2+) is bound by residues Cys132, Cys135, Cys152, and Cys155. The AMP site is built by Arg162 and Arg174. Residue Ala202 participates in ATP binding.

The protein belongs to the adenylate kinase family. In terms of assembly, monomer.

It localises to the cytoplasm. It carries out the reaction AMP + ATP = 2 ADP. Its pathway is purine metabolism; AMP biosynthesis via salvage pathway; AMP from ADP: step 1/1. In terms of biological role, catalyzes the reversible transfer of the terminal phosphate group between ATP and AMP. Plays an important role in cellular energy homeostasis and in adenine nucleotide metabolism. This Sphingopyxis alaskensis (strain DSM 13593 / LMG 18877 / RB2256) (Sphingomonas alaskensis) protein is Adenylate kinase.